The following is a 130-amino-acid chain: Large ribosomal subunit protein bL21 (130 aa).

Residues 103–130 (AGGKTSKAEPRKTRKAEPAAESAPAAAE) form a disordered region. The segment covering 108 to 120 (SKAEPRKTRKAEP) has biased composition (basic and acidic residues). The segment covering 121–130 (AAESAPAAAE) has biased composition (low complexity).

Belongs to the bacterial ribosomal protein bL21 family. As to quaternary structure, part of the 50S ribosomal subunit. Contacts protein L20.

In terms of biological role, this protein binds to 23S rRNA in the presence of protein L20. In Methylorubrum extorquens (strain CM4 / NCIMB 13688) (Methylobacterium extorquens), this protein is Large ribosomal subunit protein bL21.